Here is a 274-residue protein sequence, read N- to C-terminus: HMP-PP phosphatase (274 aa).

The Nucleophile role is filled by aspartate 8. Mg(2+) contacts are provided by aspartate 8, aspartate 10, and aspartate 213.

This sequence belongs to the HAD-like hydrolase superfamily. Cof family. The cofactor is Mg(2+).

The enzyme catalyses 4-amino-2-methyl-5-(diphosphooxymethyl)pyrimidine + H2O = 4-amino-2-methyl-5-(phosphooxymethyl)pyrimidine + phosphate + H(+). Catalyzes the hydrolysis of 4-amino-2-methyl-5-hydroxymethylpyrimidine pyrophosphate (HMP-PP) to 4-amino-2-methyl-5-hydroxymethylpyrimidine phosphate (HMP-P). This chain is HMP-PP phosphatase, found in Serratia proteamaculans (strain 568).